The primary structure comprises 272 residues: 1,4-dihydroxy-2-naphthoyl-CoA synthase (272 aa).

Substrate is bound by residues Arg-33, 72 to 76 (SGGDQ), Tyr-84, 116 to 120 (YAIGG), Thr-142, Ser-148, Tyr-245, and Lys-260. 141–143 (QTG) serves as a coordination point for hydrogencarbonate. The span at 253-264 (GRDAFKEKRDPD) shows a compositional bias: basic and acidic residues. The disordered stretch occupies residues 253 to 272 (GRDAFKEKRDPDFDQFPKFP).

Belongs to the enoyl-CoA hydratase/isomerase family. MenB subfamily. Requires hydrogencarbonate as cofactor.

It catalyses the reaction 2-succinylbenzoyl-CoA + H(+) = 1,4-dihydroxy-2-naphthoyl-CoA + H2O. The protein operates within quinol/quinone metabolism; 1,4-dihydroxy-2-naphthoate biosynthesis; 1,4-dihydroxy-2-naphthoate from chorismate: step 6/7. It participates in quinol/quinone metabolism; menaquinone biosynthesis. Converts o-succinylbenzoyl-CoA (OSB-CoA) to 1,4-dihydroxy-2-naphthoyl-CoA (DHNA-CoA). The protein is 1,4-dihydroxy-2-naphthoyl-CoA synthase of Staphylococcus haemolyticus (strain JCSC1435).